Consider the following 246-residue polypeptide: Bis(5'-nucleosyl)-tetraphosphatase PrpE [asymmetrical] (246 aa).

The protein belongs to the PrpE family. Ni(2+) serves as cofactor.

It carries out the reaction P(1),P(4)-bis(5'-guanosyl) tetraphosphate + H2O = GMP + GTP + 2 H(+). Asymmetrically hydrolyzes Ap4p to yield AMP and ATP. In Bacillus cereus (strain 03BB102), this protein is Bis(5'-nucleosyl)-tetraphosphatase PrpE [asymmetrical].